The sequence spans 360 residues: UDP-N-acetylglucosamine--N-acetylmuramyl-(pentapeptide) pyrophosphoryl-undecaprenol N-acetylglucosamine transferase (360 aa).

Residues 13-15 (TGG), asparagine 125, arginine 164, serine 191, and glutamine 290 contribute to the UDP-N-acetyl-alpha-D-glucosamine site.

Belongs to the glycosyltransferase 28 family. MurG subfamily.

It is found in the cell inner membrane. It catalyses the reaction di-trans,octa-cis-undecaprenyl diphospho-N-acetyl-alpha-D-muramoyl-L-alanyl-D-glutamyl-meso-2,6-diaminopimeloyl-D-alanyl-D-alanine + UDP-N-acetyl-alpha-D-glucosamine = di-trans,octa-cis-undecaprenyl diphospho-[N-acetyl-alpha-D-glucosaminyl-(1-&gt;4)]-N-acetyl-alpha-D-muramoyl-L-alanyl-D-glutamyl-meso-2,6-diaminopimeloyl-D-alanyl-D-alanine + UDP + H(+). It participates in cell wall biogenesis; peptidoglycan biosynthesis. In terms of biological role, cell wall formation. Catalyzes the transfer of a GlcNAc subunit on undecaprenyl-pyrophosphoryl-MurNAc-pentapeptide (lipid intermediate I) to form undecaprenyl-pyrophosphoryl-MurNAc-(pentapeptide)GlcNAc (lipid intermediate II). The polypeptide is UDP-N-acetylglucosamine--N-acetylmuramyl-(pentapeptide) pyrophosphoryl-undecaprenol N-acetylglucosamine transferase (Hahella chejuensis (strain KCTC 2396)).